The chain runs to 81 residues: MKLTCVMIVAVLFLTAWTFVTADDSRNGLENLSPKARHEMKNPEASKSNKRYECYSTGTFCGVNGGLCCSNLCLFFVCLFS.

The first 22 residues, 1–22 (MKLTCVMIVAVLFLTAWTFVTA), serve as a signal peptide directing secretion. The propeptide occupies 23 to 51 (DDSRNGLENLSPKARHEMKNPEASKSNKR). 3 cysteine pairs are disulfide-bonded: cysteine 54/cysteine 69, cysteine 61/cysteine 73, and cysteine 68/cysteine 78.

This sequence belongs to the conotoxin O1 superfamily. Expressed by the venom duct.

The protein localises to the secreted. Its function is as follows. Delta-conotoxins bind to site 6 of voltage-gated sodium channels (Nav) and inhibit the inactivation process. The chain is Delta-conotoxin-like Ac6.3 from Conus achatinus (Little frog cone).